Consider the following 411-residue polypeptide: KIN17-like protein (411 aa).

The C2H2-type zinc-finger motif lies at 28 to 50; that stretch reads CQMCQKQCRDENGFKCHCMSESH. The tract at residues 51–160 is winged helix-turn-helix (wHTH); that stretch reads QRQMQVFGQN…KERLKNKRVK (110 aa). Residues 147 to 183 are a coiled coil; that stretch reads ETLFKERLKNKRVKSDLAEEEKQEREIQRQIERAAEK. Disordered stretches follow at residues 182-211 and 232-286; these read EKLN…KKDE and VATG…EEEK. Over residues 253 to 286 the composition is skewed to basic and acidic residues; the sequence is KVERGEKRKRSGDSGRSEKERRSALDELMKEEEK. Positions 259–262 match the Nuclear localization signal (NLS) motif; sequence KRKR. Residues 265–294 are a coiled coil; sequence DSGRSEKERRSALDELMKEEEKKKERMNRK. Positions 301 to 352 are C-terminal subdomain A; the sequence is GIIVKVMSKALAEKGYYKQKGVVKKVIDNYVGEIKMLDSKHVLRVDQKELET. The C-terminal subdomain B stretch occupies residues 358-409; that stretch reads GGMVKIVNGAYRGSNARLLGVDTEKFCAKVQIEKGVYDGRVIKSIEYEDICK.

It belongs to the KIN17 family. In terms of assembly, interacts with SPL7. In terms of tissue distribution, expressed in root vasculature, lateral roots, cotyledons, rosette leaves, cauline leaves, stems, sepals, style of pistils, mature pollen grains and siliques.

Its subcellular location is the nucleus speckle. In terms of biological role, promotes the copper deficiency response by direct interaction with SPL7. Acts with SPL7 in a common pathway to promote copper-responsive genes and alleviate oxidative stress during copper-limiting periods. May promote SPL7 function when copper is limiting. Participates in the control of general plant growth and development, and in the response to counteract the negative effects of UV radiation. This Arabidopsis thaliana (Mouse-ear cress) protein is KIN17-like protein.